Here is a 656-residue protein sequence, read N- to C-terminus: DNA mismatch repair protein MutL (656 aa).

Belongs to the DNA mismatch repair MutL/HexB family.

This protein is involved in the repair of mismatches in DNA. It is required for dam-dependent methyl-directed DNA mismatch repair. May act as a 'molecular matchmaker', a protein that promotes the formation of a stable complex between two or more DNA-binding proteins in an ATP-dependent manner without itself being part of a final effector complex. The polypeptide is DNA mismatch repair protein MutL (Lactococcus lactis subsp. lactis (strain IL1403) (Streptococcus lactis)).